A 510-amino-acid chain; its full sequence is Maturase K (510 aa).

Belongs to the intron maturase 2 family. MatK subfamily.

It localises to the plastid. It is found in the chloroplast. Functionally, usually encoded in the trnK tRNA gene intron. Probably assists in splicing its own and other chloroplast group II introns. The chain is Maturase K from Gratiola officinalis (Hedgehyssop).